The following is a 541-amino-acid chain: MSQLVECVPNFSEGKNQEVIDAISRAVAQTPGCVLLDVDSGPSTNRTVYTFVGRPEDVVEGALNAARAAYQLIDMSRHHGEHPRMGALDVCPFIPVRGVTMDECVRCAQAFGQRLAEELGVPVYLYGEAARTAGRQSLPALRAGEYEALPEKLKQAEWAPDFGPSAFVPSWGATVAGARKFLLAFNINLLSTREQAHRIALDLREQGRGKDQPGRLKKVQAIGWYLDEKNLAQVSTNLLDFEVTGLHTVFEETCREAQELSLPVVGSQLVGLVPLKALLDAAAFYCEKENLFLLQDEHRIRLVVNRLGLDSLAPFKPKERIIEYLVPEAGPEQSLLHKPLRTFVREVGSRSAAPGAGSVAAATAAMGAALASMVGLMTYGRRQFEHLDATMRRLIPPFHAASAKLTSLVDADARAFEAYLKAMKLPKDTPEDKDRRAAALQEGLRQAVAVPLALAETVASLWPALQELALCGNLACRSDLQVAAKALETGVFGAYFNVLINLKDVTDDAFKAQVRQRISSLLQEAKTQAALVLDRLEARQA.

The interval 1–181 (MSQLVECVPN…GATVAGARKF (181 aa)) is formiminotransferase N-subdomain. Residue His-82 is the For formimidoyltransferase activity of the active site. Residue 163–172 (GPSAFVPSWG) coordinates folate. The formiminotransferase C-subdomain stretch occupies residues 182-326 (LLAFNINLLS…PKERIIEYLV (145 aa)). The interval 327 to 334 (PEAGPEQS) is linker. A cyclodeaminase/cyclohydrolase region spans residues 335–541 (LLHKPLRTFV…VLDRLEARQA (207 aa)). The active-site For cyclodeaminase activity is Asp-412. The residue at position 520 (Ser-520) is a Phosphoserine.

The protein in the C-terminal section; belongs to the cyclodeaminase/cyclohydrolase family. It in the N-terminal section; belongs to the formiminotransferase family. Homooctamer, including four polyglutamate binding sites. The subunits are arranged as a tetramer of dimers, and form a planar ring-shaped structure.

It is found in the cytoplasm. The protein localises to the cytosol. It localises to the golgi apparatus. The protein resides in the cytoskeleton. Its subcellular location is the microtubule organizing center. It is found in the centrosome. The protein localises to the centriole. It catalyses the reaction 5-formimidoyltetrahydrofolate + L-glutamate = N-formimidoyl-L-glutamate + (6S)-5,6,7,8-tetrahydrofolate. The catalysed reaction is 5-formimidoyltetrahydrofolate + 2 H(+) = (6R)-5,10-methenyltetrahydrofolate + NH4(+). It functions in the pathway amino-acid degradation; L-histidine degradation into L-glutamate; L-glutamate from N-formimidoyl-L-glutamate (transferase route): step 1/1. Folate-dependent enzyme, that displays both transferase and deaminase activity. Serves to channel one-carbon units from formiminoglutamate to the folate pool. In terms of biological role, binds and promotes bundling of vimentin filaments originating from the Golgi. This Sus scrofa (Pig) protein is Formimidoyltransferase-cyclodeaminase (FTCD).